We begin with the raw amino-acid sequence, 98 residues long: Guanine nucleotide-binding protein subunit gamma 1 (98 aa).

In terms of domain architecture, G protein gamma spans G19–L98. A coiled-coil region spans residues K20–V50. A regulates lipidation and cell membrane subcellular localization region spans residues N88–R94. A lipid anchor (S-palmitoyl cysteine) is attached at C93. A Cysteine methyl ester modification is found at C95. C95 carries the S-farnesyl cysteine lipid modification. Residues L96–L98 constitute a propeptide, removed in mature form.

G proteins are composed of 3 units, alpha, beta and gamma. Interacts with the beta subunit GB1. The dimer GB1-GG1 interacts with NDL1, NDL2 and NDL3. Binds to NUDT7. Mostly expressed in seedlings (especially at the hypocotyl/root junction), young cauline leaves, open flowers, and floral stems, and, to a lower extent, in roots (restricted to the stele), rosette leaves (restricted to veins), siliques, and unopened floral buds. Also present in hydathods.

The protein resides in the cell membrane. It is found in the golgi apparatus membrane. Its subcellular location is the golgi apparatus. The protein localises to the trans-Golgi network membrane. It localises to the cytoplasm. Guanine nucleotide-binding proteins (G proteins) are involved as a modulator or transducer in various transmembrane signaling systems. The beta and gamma chains are required for the GTPase activity, for replacement of GDP by GTP, and for G protein-effector interaction. Involved in the abscisic acid (ABA) and ethylene signaling pathways. Regulates acropetal transport of auxin (IAA) in roots and hypocotyls, and thus modulates root architecture (e.g. lateral root formation). The heterotrimeric G-protein controls defense responses to necrotrophic and vascular fungi probably by modulating cell wall-related genes expression; involved in resistance to fungal pathogens such as Alternaria brassicicola, Plectosphaerella cucumerina and Fusarium oxysporum. The protein is Guanine nucleotide-binding protein subunit gamma 1 (GG1) of Arabidopsis thaliana (Mouse-ear cress).